The chain runs to 195 residues: Imidazoleglycerol-phosphate dehydratase (195 aa).

Belongs to the imidazoleglycerol-phosphate dehydratase family.

The protein resides in the cytoplasm. It carries out the reaction D-erythro-1-(imidazol-4-yl)glycerol 3-phosphate = 3-(imidazol-4-yl)-2-oxopropyl phosphate + H2O. The protein operates within amino-acid biosynthesis; L-histidine biosynthesis; L-histidine from 5-phospho-alpha-D-ribose 1-diphosphate: step 6/9. This Burkholderia pseudomallei (strain 1710b) protein is Imidazoleglycerol-phosphate dehydratase.